Consider the following 78-residue polypeptide: Putative capsid protein ORF9 (78 aa).

Residues 1–29 form the signal peptide; sequence MIKLVLLVAAIAIFGTGFITVIINQFTSA. A helical membrane pass occupies residues 52–72; that stretch reads VLFSHPLMLTISSLYIVGFIV.

The protein belongs to the plectrovirus ORF9 family. In terms of assembly, homomultimerizes.

The protein resides in the virion. Its subcellular location is the host membrane. Functionally, may self assemble to form a helical capsid wrapping up the viral genomic DNA. The virion assembly and budding take place at the host inner membrane. This is Putative capsid protein ORF9 from Spiroplasma virus SpV1-C74 (SpV1).